The following is a 140-amino-acid chain: Relaxin-3 (140 aa).

The first 23 residues, 1 to 23 (MATRGLLLASWALLGALVLQAEA), serve as a signal peptide directing secretion. Cystine bridges form between Cys-33–Cys-127, Cys-45–Cys-140, and Cys-126–Cys-131. Positions 53–116 (ADILAHDPLG…GSPGVVRGSR (64 aa)) are cleaved as a propeptide — connecting peptide.

This sequence belongs to the insulin family. Heterodimer of a B chain and an A chain linked by two disulfide bonds. Highly abundant expression is detected in neurons within the ventomedial dorsal tegmental nucleus and the laterally central gray alpha of the pons. Also detected at much lower levels within the hippocampus.

The protein localises to the secreted. In terms of biological role, may play a role in neuropeptide signaling processes. Ligand for LGR7, relaxin-3 receptor-1 and relaxin-3 receptor-2. The sequence is that of Relaxin-3 (Rln3) from Rattus norvegicus (Rat).